We begin with the raw amino-acid sequence, 73 residues long: Large ribosomal subunit protein bL31 (73 aa).

The protein belongs to the bacterial ribosomal protein bL31 family. Type A subfamily. As to quaternary structure, part of the 50S ribosomal subunit.

Functionally, binds the 23S rRNA. This is Large ribosomal subunit protein bL31 from Cereibacter sphaeroides (strain ATCC 17029 / ATH 2.4.9) (Rhodobacter sphaeroides).